Here is a 218-residue protein sequence, read N- to C-terminus: Hypoxanthine-guanine phosphoribosyltransferase (218 aa).

Ala-2 is subject to N-acetylalanine. Lys-69 contacts GMP. An N6-acetyllysine modification is found at Lys-103. A Glycyl lysine isopeptide (Lys-Gly) (interchain with G-Cter in SUMO1); alternate cross-link involves residue Lys-115. Lys-115 is covalently cross-linked (Glycyl lysine isopeptide (Lys-Gly) (interchain with G-Cter in SUMO2); alternate). GMP is bound by residues 134–142 (EDIIDTGKT), Lys-166, 186–188 (KFV), and Asp-194. Residue Asp-138 is the Proton acceptor of the active site. Phosphothreonine is present on Thr-142. Mg(2+) is bound at residue Asp-194.

Belongs to the purine/pyrimidine phosphoribosyltransferase family. As to quaternary structure, homotetramer. Mg(2+) is required as a cofactor.

The protein localises to the cytoplasm. It carries out the reaction IMP + diphosphate = hypoxanthine + 5-phospho-alpha-D-ribose 1-diphosphate. It catalyses the reaction GMP + diphosphate = guanine + 5-phospho-alpha-D-ribose 1-diphosphate. It functions in the pathway purine metabolism; IMP biosynthesis via salvage pathway; IMP from hypoxanthine: step 1/1. Converts guanine to guanosine monophosphate, and hypoxanthine to inosine monophosphate. Transfers the 5-phosphoribosyl group from 5-phosphoribosylpyrophosphate onto the purine. Plays a central role in the generation of purine nucleotides through the purine salvage pathway. This is Hypoxanthine-guanine phosphoribosyltransferase (HPRT1) from Cricetulus griseus (Chinese hamster).